The following is a 771-amino-acid chain: Kojibiose phosphorylase (771 aa).

358-359 serves as a coordination point for substrate; it reads WD. The Proton donor role is filled by E498. Position 611–612 (611–612) interacts with substrate; that stretch reads KQ.

This sequence belongs to the glycosyl hydrolase 65 family.

It catalyses the reaction kojibiose + phosphate = beta-D-glucose 1-phosphate + D-glucose. Functionally, catalyzes the reversible phosphorolysis of kojibiose into beta-D-glucose 1-phosphate (Glc1P) and D-glucose. This Caldanaerobacter subterraneus subsp. tengcongensis (strain DSM 15242 / JCM 11007 / NBRC 100824 / MB4) (Thermoanaerobacter tengcongensis) protein is Kojibiose phosphorylase (kojP).